Here is a 1158-residue protein sequence, read N- to C-terminus: ATP-dependent helicase/deoxyribonuclease subunit B (1158 aa).

The UvrD-like helicase ATP-binding domain occupies 1–275; sequence MTLHAYLGRA…QYFNQLYRFN (275 aa). Position 8–15 (8–15) interacts with ATP; it reads GRAGTGKS. The 315-residue stretch at 269-583 folds into the UvrD-like helicase C-terminal domain; that stretch reads NQLYRFNNQD…SIGTMDLAKV (315 aa). 4 residues coordinate [4Fe-4S] cluster: C784, C1112, C1115, and C1121.

It belongs to the helicase family. AddB/RexB type 1 subfamily. In terms of assembly, heterodimer of AddA and AddB. The cofactor is Mg(2+). It depends on [4Fe-4S] cluster as a cofactor.

Functionally, the heterodimer acts as both an ATP-dependent DNA helicase and an ATP-dependent, dual-direction single-stranded exonuclease. Recognizes the chi site generating a DNA molecule suitable for the initiation of homologous recombination. The AddB subunit has 5' -&gt; 3' nuclease activity but not helicase activity. The protein is ATP-dependent helicase/deoxyribonuclease subunit B of Staphylococcus aureus (strain MW2).